A 118-amino-acid chain; its full sequence is Putative membrane protein insertion efficiency factor (118 aa).

The protein belongs to the UPF0161 family.

It is found in the cell inner membrane. Functionally, could be involved in insertion of integral membrane proteins into the membrane. The protein is Putative membrane protein insertion efficiency factor of Helicobacter pylori (strain P12).